Consider the following 389-residue polypeptide: Phospho-N-acetylmuramoyl-pentapeptide-transferase (389 aa).

Transmembrane regions (helical) follow at residues Arg25–Ile45, Thr73–Leu93, Phe97–Tyr117, Phe135–Ala155, Ile190–Ala210, Gly222–Met242, Gly258–Trp278, Val286–Ile306, Ile311–Val331, and Gln366–Leu386.

It belongs to the glycosyltransferase 4 family. MraY subfamily. Requires Mg(2+) as cofactor.

It localises to the cell inner membrane. It carries out the reaction UDP-N-acetyl-alpha-D-muramoyl-L-alanyl-gamma-D-glutamyl-meso-2,6-diaminopimeloyl-D-alanyl-D-alanine + di-trans,octa-cis-undecaprenyl phosphate = di-trans,octa-cis-undecaprenyl diphospho-N-acetyl-alpha-D-muramoyl-L-alanyl-D-glutamyl-meso-2,6-diaminopimeloyl-D-alanyl-D-alanine + UMP. Its pathway is cell wall biogenesis; peptidoglycan biosynthesis. In terms of biological role, catalyzes the initial step of the lipid cycle reactions in the biosynthesis of the cell wall peptidoglycan: transfers peptidoglycan precursor phospho-MurNAc-pentapeptide from UDP-MurNAc-pentapeptide onto the lipid carrier undecaprenyl phosphate, yielding undecaprenyl-pyrophosphoryl-MurNAc-pentapeptide, known as lipid I. This Burkholderia mallei (strain NCTC 10247) protein is Phospho-N-acetylmuramoyl-pentapeptide-transferase.